Consider the following 514-residue polypeptide: DNA-(apurinic or apyrimidinic site) endonuclease 2 (514 aa).

The Mg(2+) site is built by asparagine 8 and glutamate 48. Residue tyrosine 156 is part of the active site. Residues aspartate 197, asparagine 199, aspartate 303, and histidine 304 each coordinate Mg(2+). Aspartate 197 functions as the Proton donor/acceptor in the catalytic mechanism. Histidine 304 acts as the Proton acceptor in catalysis. The segment at 359-417 (PSNQTQVHMRKNKARVRSTRSRPSKTGSSRGQKNLMSYFQPSSSGPQTSNLDLPSLGTL) is disordered. Positions 366 to 381 (HMRKNKARVRSTRSRP) are enriched in basic residues. Lysine 371 participates in a covalent cross-link: Glycyl lysine isopeptide (Lys-Gly) (interchain with G-Cter in ubiquitin). Residues 382 to 410 (SKTGSSRGQKNLMSYFQPSSSGPQTSNLD) show a composition bias toward polar residues. The segment at 390 to 397 (QKNLMSYF) is required for the interaction and colocalization with PCNA in nuclear foci in presence of oxidative-induced DNA damaging agents. Positions 465, 468, 491, and 505 each coordinate Zn(2+). The segment at 465 to 514 (CGGHREPCVMRTVKKPGPNLGRHFYMCARPQGPPTDPSSRCNFFLWSRPS) adopts a GRF-type zinc-finger fold.

The protein belongs to the DNA repair enzymes AP/ExoA family. Interacts with PCNA; this interaction is triggered by reactive oxygen species and increased by misincorporation of uracil in nuclear DNA. Mg(2+) is required as a cofactor. The cofactor is Mn(2+). Post-translationally, ubiquitinated by the CUL9-RBX1 complex. Ubiquitinated by MKRN3 at Lys-371 leading to proteasomal degradation.

It localises to the nucleus. The protein resides in the cytoplasm. It is found in the mitochondrion. The catalysed reaction is Exonucleolytic cleavage in the 3'- to 5'-direction to yield nucleoside 5'-phosphates.. Its activity is regulated as follows. 3'-5' exonuclease activity is activated by sodium and manganese. 3'-5' exonuclease and 3'-phosphodiesterase activities are stimulated in presence of PCNA. Functionally, functions as a weak apurinic/apyrimidinic (AP) endodeoxyribonuclease in the DNA base excision repair (BER) pathway of DNA lesions induced by oxidative and alkylating agents. Initiates repair of AP sites in DNA by catalyzing hydrolytic incision of the phosphodiester backbone immediately adjacent to the damage, generating a single-strand break with 5'-deoxyribose phosphate and 3'-hydroxyl ends. Also displays double-stranded DNA 3'-5' exonuclease, 3'-phosphodiesterase activities. Shows robust 3'-5' exonuclease activity on 3'-recessed heteroduplex DNA and is able to remove mismatched nucleotides preferentially. Shows fairly strong 3'-phosphodiesterase activity involved in the removal of 3'-damaged termini formed in DNA by oxidative agents. In the nucleus functions in the PCNA-dependent BER pathway. Plays a role in reversing blocked 3' DNA ends, problematic lesions that preclude DNA synthesis. Required for somatic hypermutation (SHM) and DNA cleavage step of class switch recombination (CSR) of immunoglobulin genes. Required for proper cell cycle progression during proliferation of peripheral lymphocytes. This Bos taurus (Bovine) protein is DNA-(apurinic or apyrimidinic site) endonuclease 2 (APEX2).